A 351-amino-acid chain; its full sequence is Cytoplasmic dynein 2 light intermediate chain 1 (351 aa).

A disordered region spans residues 303 to 335 (GTLKAVQDPARDPQYAESEVDEMRVQKDQELEH). Residues 323–335 (DEMRVQKDQELEH) are compositionally biased toward basic and acidic residues.

The protein belongs to the dynein light intermediate chain family. Light intermediate chain of the cytoplasmic dynein complex 2, a multisubunit complex composed at least of eleven different proteins. The cytoplasmic dynein 2 complex consists of two catalytic heavy chains (HCs) and a number of non-catalytic subunits presented by intermediate chains (ICs), light intermediate chains (LICs) and light chains (LCs). Among them, a heavy chain (DYNC2H1), two intermediate chains (DYNC2I2 and DYNC2I1), a light intermediate chain (DYNC2LI1), and a light chain (DYNLT2B) are unique to the dynein-2 complex, but a subset of light chains are also shared by dynein-1 and dynein-2 complexes. Dynein-2 complex is built around two copies of cytoplasmic dynein 2 heavy chain 1 (DYNC2H1). The C-terminal region forms the motor domain, which converts the energy from ATP hydrolysis into movement. Its N-terminal region forms the tail, an extended structure that binds the other subunits and holds the two heavy chains in a homodimer. Interacts with DYNC2H1 (via N-terminus); this interaction stabilizes the dynein-2 complex structure. In terms of tissue distribution, specifically expressed by ciliated cells in brain, lung, spleen, testis and kidney (at protein level). Enriched in the ependymal layer lining the lateral ventricles (at protein level).

The protein resides in the cytoplasm. Its subcellular location is the cell projection. It localises to the cilium. It is found in the cytoskeleton. The protein localises to the cilium basal body. The protein resides in the cilium axoneme. Its subcellular location is the microtubule organizing center. It localises to the centrosome. Its function is as follows. Acts as one of several non-catalytic accessory components of the cytoplasmic dynein 2 complex (dynein-2 complex), a motor protein complex that drives the movement of cargos along microtubules within cilia and flagella in concert with the intraflagellar transport (IFT) system, facilitating the assembly of these organelles. Involved in the regulation of ciliary length. The protein is Cytoplasmic dynein 2 light intermediate chain 1 (Dync2li1) of Mus musculus (Mouse).